A 412-amino-acid polypeptide reads, in one-letter code: Histidine--tRNA ligase (412 aa).

This sequence belongs to the class-II aminoacyl-tRNA synthetase family. Homodimer.

The protein localises to the cytoplasm. The enzyme catalyses tRNA(His) + L-histidine + ATP = L-histidyl-tRNA(His) + AMP + diphosphate + H(+). This is Histidine--tRNA ligase from Maridesulfovibrio salexigens (strain ATCC 14822 / DSM 2638 / NCIMB 8403 / VKM B-1763) (Desulfovibrio salexigens).